The primary structure comprises 498 residues: Galactose-1-phosphate uridylyltransferase (498 aa).

This sequence belongs to the galactose-1-phosphate uridylyltransferase type 2 family.

It is found in the cytoplasm. It catalyses the reaction alpha-D-galactose 1-phosphate + UDP-alpha-D-glucose = alpha-D-glucose 1-phosphate + UDP-alpha-D-galactose. It functions in the pathway carbohydrate metabolism; galactose metabolism. This chain is Galactose-1-phosphate uridylyltransferase, found in Staphylococcus carnosus (strain TM300).